A 432-amino-acid polypeptide reads, in one-letter code: Argininosuccinate lyase (432 aa).

Belongs to the lyase 1 family. Argininosuccinate lyase subfamily.

Its subcellular location is the cytoplasm. It catalyses the reaction 2-(N(omega)-L-arginino)succinate = fumarate + L-arginine. Its pathway is amino-acid biosynthesis; L-arginine biosynthesis; L-arginine from L-ornithine and carbamoyl phosphate: step 3/3. This is Argininosuccinate lyase from Xanthomonas euvesicatoria pv. vesicatoria (strain 85-10) (Xanthomonas campestris pv. vesicatoria).